A 1348-amino-acid chain; its full sequence is Phosphoribosylformylglycinamidine synthase (1348 aa).

Residues Gly-300–Asp-311 and Ala-701 contribute to the ATP site. Mg(2+) is bound by residues Asp-702, Glu-741, Asn-745, and Asp-941. ATP is bound at residue Ser-943. In terms of domain architecture, Glutamine amidotransferase type-1 spans Val-1099–Gly-1348. The active-site Nucleophile is the Cys-1192. Active-site residues include His-1313 and Glu-1315.

It in the N-terminal section; belongs to the FGAMS family. Monomer.

Its subcellular location is the cytoplasm. It catalyses the reaction N(2)-formyl-N(1)-(5-phospho-beta-D-ribosyl)glycinamide + L-glutamine + ATP + H2O = 2-formamido-N(1)-(5-O-phospho-beta-D-ribosyl)acetamidine + L-glutamate + ADP + phosphate + H(+). Its pathway is purine metabolism; IMP biosynthesis via de novo pathway; 5-amino-1-(5-phospho-D-ribosyl)imidazole from N(2)-formyl-N(1)-(5-phospho-D-ribosyl)glycinamide: step 1/2. Functionally, phosphoribosylformylglycinamidine synthase involved in the purines biosynthetic pathway. Catalyzes the ATP-dependent conversion of formylglycinamide ribonucleotide (FGAR) and glutamine to yield formylglycinamidine ribonucleotide (FGAM) and glutamate. The chain is Phosphoribosylformylglycinamidine synthase from Xanthomonas campestris pv. campestris (strain ATCC 33913 / DSM 3586 / NCPPB 528 / LMG 568 / P 25).